The primary structure comprises 156 residues: UPF0178 protein Jann_2168 (156 aa).

It belongs to the UPF0178 family.

The polypeptide is UPF0178 protein Jann_2168 (Jannaschia sp. (strain CCS1)).